A 76-amino-acid chain; its full sequence is Small ribosomal subunit protein bS18 (76 aa).

It belongs to the bacterial ribosomal protein bS18 family. In terms of assembly, part of the 30S ribosomal subunit. Forms a tight heterodimer with protein bS6.

In terms of biological role, binds as a heterodimer with protein bS6 to the central domain of the 16S rRNA, where it helps stabilize the platform of the 30S subunit. The sequence is that of Small ribosomal subunit protein bS18 from Psychrobacter arcticus (strain DSM 17307 / VKM B-2377 / 273-4).